A 239-amino-acid polypeptide reads, in one-letter code: Derlin-2 (239 aa).

The Cytoplasmic segment spans residues 1-57 (MAYQSLRLEYLQIPPVSRAYTTACVLTTAAVQLELITPFQLYFNPELIFKHFQIWRL). A helical membrane pass occupies residues 58–78 (ITNFLFFGPVGFNFLFNMIFL). The Lumenal portion of the chain corresponds to 79-96 (YRYCRMLEEGSFRGRTAD). A helical transmembrane segment spans residues 97 to 117 (FVFMFLFGGFLMTLFGLFVSL). Over 118 to 150 (VFLGQAFTIMLVYVWSRRNPYVRMNFFGLLNFQ) the chain is Cytoplasmic. A helical transmembrane segment spans residues 151-171 (APFLPWVLMGFSLLLGNSIIV). D172 is a topological domain (lumenal). A helical transmembrane segment spans residues 173 to 193 (LLGIAVGHIYFFLEDIFPNQP). The Cytoplasmic segment spans residues 194 to 239 (GGIRILKTPSILRTIFDTPDEDPNYNPLPEERPGGFAWGEGQRLGG). The segment at 214 to 239 (EDPNYNPLPEERPGGFAWGEGQRLGG) is disordered. Positions 229 to 239 (FAWGEGQRLGG) are enriched in gly residues.

This sequence belongs to the derlin family. Forms homo- and heterooligomers with DERL3 and, to a lesser extent, with DERL1. Interacts with the SEL1L/SYVN1 and VCP/SELENOS protein complexes. Mediates association between VCP and EDEM1, as well as that between VCP and the misfolded glycoproteins. Interacts with OS9. Interacts with SELENOK and SELENOS. Interacts with the signal recognition particle/SRP and the SRP receptor; in the process of endoplasmic reticulum stress-induced pre-emptive quality control. Interacts with CCDC47. As to expression, widely expressed, with lowest levels in brain and heart.

It is found in the endoplasmic reticulum membrane. Functionally, functional component of endoplasmic reticulum-associated degradation (ERAD) for misfolded lumenal glycoproteins, but not that of misfolded nonglycoproteins. May act by forming a channel that allows the retrotranslocation of misfolded glycoproteins into the cytosol where they are ubiquitinated and degraded by the proteasome. May mediate the interaction between VCP and misfolded glycoproteins. May also be involved in endoplasmic reticulum stress-induced pre-emptive quality control, a mechanism that selectively attenuates the translocation of newly synthesized proteins into the endoplasmic reticulum and reroutes them to the cytosol for proteasomal degradation. In Mus musculus (Mouse), this protein is Derlin-2.